A 202-amino-acid chain; its full sequence is Protein-methionine-sulfoxide reductase heme-binding subunit MsrQ (202 aa).

Helical transmembrane passes span 8-28 (LAVFLGALAVPAWWLYQAWIF), 42-62 (LGLGALVLLLLTLAMTPLQKL), 75-95 (LGLWCFTYVLLHLSAYCVFIL), 110-130 (PYIIVGMLGFVCLFLLAITSN), 147-167 (LVYLILGLGLLHMLWVVRADL), and 169-189 (EWTLYAVVGASLMLLRLPSIA).

The protein belongs to the MsrQ family. Heterodimer of a catalytic subunit (MsrP) and a heme-binding subunit (MsrQ). It depends on FMN as a cofactor. Requires heme b as cofactor.

It is found in the cell inner membrane. Functionally, part of the MsrPQ system that repairs oxidized periplasmic proteins containing methionine sulfoxide residues (Met-O), using respiratory chain electrons. Thus protects these proteins from oxidative-stress damage caused by reactive species of oxygen and chlorine generated by the host defense mechanisms. MsrPQ is essential for the maintenance of envelope integrity under bleach stress, rescuing a wide series of structurally unrelated periplasmic proteins from methionine oxidation. MsrQ provides electrons for reduction to the reductase catalytic subunit MsrP, using the quinone pool of the respiratory chain. In Pseudomonas aeruginosa (strain UCBPP-PA14), this protein is Protein-methionine-sulfoxide reductase heme-binding subunit MsrQ.